Consider the following 89-residue polypeptide: Small ribosomal subunit protein uS15 (89 aa).

This sequence belongs to the universal ribosomal protein uS15 family. As to quaternary structure, part of the 30S ribosomal subunit. Forms a bridge to the 50S subunit in the 70S ribosome, contacting the 23S rRNA.

In terms of biological role, one of the primary rRNA binding proteins, it binds directly to 16S rRNA where it helps nucleate assembly of the platform of the 30S subunit by binding and bridging several RNA helices of the 16S rRNA. Its function is as follows. Forms an intersubunit bridge (bridge B4) with the 23S rRNA of the 50S subunit in the ribosome. The polypeptide is Small ribosomal subunit protein uS15 (Syntrophobacter fumaroxidans (strain DSM 10017 / MPOB)).